A 79-amino-acid polypeptide reads, in one-letter code: Large ribosomal subunit protein uL30 (79 aa).

It belongs to the universal ribosomal protein uL30 family. In terms of assembly, part of the 50S ribosomal subunit.

In Anaeromyxobacter sp. (strain Fw109-5), this protein is Large ribosomal subunit protein uL30.